We begin with the raw amino-acid sequence, 237 residues long: Ribosomal RNA small subunit methyltransferase G (237 aa).

A disordered region spans residues methionine 1–threonine 25. A compositionally biased stretch (low complexity) spans proline 7–alanine 21. Residues glycine 85, phenylalanine 90, and arginine 155 each coordinate S-adenosyl-L-methionine.

It belongs to the methyltransferase superfamily. RNA methyltransferase RsmG family.

The protein resides in the cytoplasm. It catalyses the reaction guanosine(527) in 16S rRNA + S-adenosyl-L-methionine = N(7)-methylguanosine(527) in 16S rRNA + S-adenosyl-L-homocysteine. In terms of biological role, specifically methylates the N7 position of guanine in position 527 of 16S rRNA. This chain is Ribosomal RNA small subunit methyltransferase G, found in Rhodopseudomonas palustris (strain HaA2).